Reading from the N-terminus, the 102-residue chain is ATP-dependent Clp protease adapter protein ClpS (102 aa).

This sequence belongs to the ClpS family. In terms of assembly, binds to the N-terminal domain of the chaperone ClpA.

Its function is as follows. Involved in the modulation of the specificity of the ClpAP-mediated ATP-dependent protein degradation. This Shewanella pealeana (strain ATCC 700345 / ANG-SQ1) protein is ATP-dependent Clp protease adapter protein ClpS.